The chain runs to 1236 residues: ATP-dependent helicase/nuclease subunit A (1236 aa).

In terms of domain architecture, UvrD-like helicase ATP-binding spans 4–473; that stretch reads VKWTKEQQQA…VNLFKNFRSR (470 aa). Position 25–32 (25–32) interacts with ATP; it reads AAAGSGKT. The 295-residue stretch at 512 to 806 folds into the UvrD-like helicase C-terminal domain; the sequence is YEDKSLVGGP…RIMSIHKSKG (295 aa).

It belongs to the helicase family. AddA subfamily. In terms of assembly, heterodimer of AddA and AddB/RexB. Mg(2+) serves as cofactor.

The catalysed reaction is Couples ATP hydrolysis with the unwinding of duplex DNA by translocating in the 3'-5' direction.. It catalyses the reaction ATP + H2O = ADP + phosphate + H(+). Functionally, the heterodimer acts as both an ATP-dependent DNA helicase and an ATP-dependent, dual-direction single-stranded exonuclease. Recognizes the chi site generating a DNA molecule suitable for the initiation of homologous recombination. The AddA nuclease domain is required for chi fragment generation; this subunit has the helicase and 3' -&gt; 5' nuclease activities. The chain is ATP-dependent helicase/nuclease subunit A from Clostridium novyi (strain NT).